Consider the following 100-residue polypeptide: Succinate dehydrogenase subunit 7B, mitochondrial (100 aa).

Residues 1 to 25 (MAFLLNNASISSHLRSSSSQKTGDA) form a disordered region. The transit peptide at 1–32 (MAFLLNNASISSHLRSSSSQKTGDALSISRRG) directs the protein to the mitochondrion. Over residues 9 to 19 (SISSHLRSSSS) the composition is skewed to low complexity.

Component of complex II composed of eight subunits in plants: four classical SDH subunits SDH1, SDH2, SDH3 and SDH4 (a flavoprotein (FP), an iron-sulfur protein (IP), and a cytochrome b composed of a large and a small subunit.), as well as four subunits unknown in mitochondria from bacteria and heterotrophic eukaryotes.

It is found in the mitochondrion inner membrane. Its pathway is carbohydrate metabolism; tricarboxylic acid cycle. The chain is Succinate dehydrogenase subunit 7B, mitochondrial from Arabidopsis thaliana (Mouse-ear cress).